Reading from the N-terminus, the 357-residue chain is Dihydroorotate dehydrogenase (quinone) (357 aa).

Residues 65 to 69 (AGLDK) and T89 each bind FMN. K69 lines the substrate pocket. A substrate-binding site is contributed by 114-118 (NRFGF). FMN contacts are provided by N156 and N189. N189 is a binding site for substrate. Catalysis depends on S192, which acts as the Nucleophile. N194 is a binding site for substrate. Residues K234 and T262 each coordinate FMN. 263-264 (NT) lines the substrate pocket. FMN contacts are provided by residues G285, G314, and 335–336 (YT).

The protein belongs to the dihydroorotate dehydrogenase family. Type 2 subfamily. Monomer. FMN serves as cofactor.

It is found in the cell membrane. It carries out the reaction (S)-dihydroorotate + a quinone = orotate + a quinol. Its pathway is pyrimidine metabolism; UMP biosynthesis via de novo pathway; orotate from (S)-dihydroorotate (quinone route): step 1/1. Its function is as follows. Catalyzes the conversion of dihydroorotate to orotate with quinone as electron acceptor. This Albidiferax ferrireducens (strain ATCC BAA-621 / DSM 15236 / T118) (Rhodoferax ferrireducens) protein is Dihydroorotate dehydrogenase (quinone).